A 121-amino-acid polypeptide reads, in one-letter code: Small ribosomal subunit protein uS13 (121 aa).

A disordered region spans residues 94–121; that stretch reads GLPVRGQRTRTNARTRKGPRKGAAALKK.

The protein belongs to the universal ribosomal protein uS13 family. As to quaternary structure, part of the 30S ribosomal subunit. Forms a loose heterodimer with protein S19. Forms two bridges to the 50S subunit in the 70S ribosome.

Located at the top of the head of the 30S subunit, it contacts several helices of the 16S rRNA. In the 70S ribosome it contacts the 23S rRNA (bridge B1a) and protein L5 of the 50S subunit (bridge B1b), connecting the 2 subunits; these bridges are implicated in subunit movement. Contacts the tRNAs in the A and P-sites. The polypeptide is Small ribosomal subunit protein uS13 (Verminephrobacter eiseniae (strain EF01-2)).